Reading from the N-terminus, the 398-residue chain is Signal-regulatory protein beta-1 (398 aa).

Residues 1–29 (MPVPASWPHLPSPFLLMTLLLGRLTGVAG) form the signal peptide. Positions 30-136 (EDELQVIQPE…SPDDVEFKSG (107 aa)) constitute an Ig-like V-type domain. The Extracellular portion of the chain corresponds to 30-371 (EDELQVIQPE…EAALAPTAPL (342 aa)). Disulfide bonds link cysteine 54/cysteine 120 and cysteine 169/cysteine 227. 2 consecutive Ig-like C1-type domains span residues 147 to 246 (PSAP…ANLS) and 253 to 347 (PTLE…YALE). N-linked (GlcNAc...) asparagine glycosylation is found at asparagine 244, asparagine 269, and asparagine 291. A helical transmembrane segment spans residues 372–392 (LVALLLGPKLLLVVGVSAIYI). Over 393 to 398 (CWKQKA) the chain is Cytoplasmic.

As to quaternary structure, homodimer; disulfide-linked. Interacts with TYROBP. This interaction results in the recruitment of SYK. Post-translationally, N-glycosylated. In terms of tissue distribution, detected in monocytes and dendritic cells.

The protein localises to the cell membrane. Its function is as follows. Immunoglobulin-like cell surface receptor involved in the negative regulation of receptor tyrosine kinase-coupled signaling processes. Also participates in the recruitment of tyrosine kinase SYK. Triggers activation of myeloid cells when associated with TYROBP. This is Signal-regulatory protein beta-1 (SIRPB1) from Homo sapiens (Human).